Reading from the N-terminus, the 437-residue chain is Epsilon-sarcoglycan (437 aa).

Topologically, residues 1–317 are extracellular; sequence MQLPRWWELG…LKSRDYYTDF (317 aa). N-linked (GlcNAc...) asparagine glycosylation is present at N200. Residues 318–338 traverse the membrane as a helical segment; sequence LITLAVPSAVALVLFLILAYI. At 339–437 the chain is on the cytoplasmic side; that stretch reads MCCRREGVEK…QQQTTGKWYP (99 aa).

Belongs to the sarcoglycan alpha/epsilon family. Post-translationally, N-glycosylated. Ubiquitinated, leading to its degradation by the proteasome.

Its subcellular location is the cell membrane. The protein localises to the sarcolemma. The protein resides in the cytoplasm. It localises to the cytoskeleton. It is found in the cell projection. Its subcellular location is the dendrite. The protein localises to the golgi apparatus. Its function is as follows. Component of the sarcoglycan complex, a subcomplex of the dystrophin-glycoprotein complex which forms a link between the F-actin cytoskeleton and the extracellular matrix. The protein is Epsilon-sarcoglycan of Macaca fascicularis (Crab-eating macaque).